Consider the following 361-residue polypeptide: Peptide chain release factor 1 (361 aa).

Gln-237 carries the post-translational modification N5-methylglutamine. Over residues 287-297 (KQQKEQSDTRK) the composition is skewed to basic and acidic residues. Residues 287-313 (KQQKEQSDTRKSLVGSGDRSERIRTYN) form a disordered region.

The protein belongs to the prokaryotic/mitochondrial release factor family. Methylated by PrmC. Methylation increases the termination efficiency of RF1.

The protein localises to the cytoplasm. In terms of biological role, peptide chain release factor 1 directs the termination of translation in response to the peptide chain termination codons UAG and UAA. This chain is Peptide chain release factor 1, found in Francisella tularensis subsp. tularensis (strain FSC 198).